We begin with the raw amino-acid sequence, 266 residues long: 15-hydroxyprostaglandin dehydrogenase [NAD(+)] (266 aa).

NAD(+) is bound by residues 12-20, 36-37, 63-65, and N91; these read GAAQGIGKA, DW, and CDV. Positions 138 and 148 each coordinate substrate. Y151 functions as the Proton acceptor in the catalytic mechanism. NAD(+) is bound by residues 151–155 and 186–188; these read YCASK and VKT.

This sequence belongs to the short-chain dehydrogenases/reductases (SDR) family. Homodimer.

The protein localises to the cytoplasm. The enzyme catalyses prostaglandin E2 + NAD(+) = 15-oxoprostaglandin E2 + NADH + H(+). It carries out the reaction (15S)-hydroxy-(5Z,8Z,11Z,13E)-eicosatetraenoate + NAD(+) = 15-oxo-(5Z,8Z,11Z,13E)-eicosatetraenoate + NADH + H(+). It catalyses the reaction (11R)-hydroxy-(5Z,8Z,12E,14Z)-eicosatetraenoate + NAD(+) = 11-oxo-(5Z,8Z,12E,14Z)-eicosatetraenoate + NADH + H(+). The catalysed reaction is lipoxin A4 + NAD(+) = 15-oxo-(5S,6R)-dihydroxy-(7E,9E,11Z,13E)-eicosatetraenoate + NADH + H(+). The enzyme catalyses 15-oxo-(5S,6R)-dihydroxy-(7E,9E,11Z)-eicosatrienoate + NADH + H(+) = (5S,6R,15S)-trihydroxy-(7E,9E,11Z)-eicosatrienoate + NAD(+). It carries out the reaction prostaglandin A1 + NAD(+) = 15-oxo-prostaglandin A1 + NADH + H(+). It catalyses the reaction prostaglandin E1 + NAD(+) = 15-oxoprostaglandin E1 + NADH + H(+). The catalysed reaction is 14-hydroxy-(4Z,7Z,10Z,12E,16Z,19Z)-docosahexaenoate + NAD(+) = 14-oxo-(4Z,7Z,10Z,12E,16Z,19Z)-docosahexaenoate + NADH + H(+). The enzyme catalyses resolvin E1 + NAD(+) = 18-oxo-resolvin E1 + NADH + H(+). It carries out the reaction resolvin D1 + NAD(+) = 8-oxoresolvin D1 + NADH + H(+). It catalyses the reaction resolvin D1 + NAD(+) = 17-oxoresolvin D1 + NADH + H(+). The catalysed reaction is resolvin D2 + NAD(+) = 7-oxoresolvin D2 + NADH + H(+). The enzyme catalyses resolvin D2 + NAD(+) = 16-oxoresolvin D2 + NADH + H(+). Functionally, catalyzes the NAD-dependent dehydrogenation (oxidation) of a broad array of hydroxylated polyunsaturated fatty acids (mainly eicosanoids and docosanoids, including prostaglandins, lipoxins and resolvins), yielding their corresponding keto (oxo) metabolites. Decreases the levels of the pro-proliferative prostaglandins such as prostaglandin E2 (whose activity is increased in cancer because of an increase in the expression of cyclooxygenase 2) and generates oxo-fatty acid products that can profoundly influence cell function by abrogating pro-inflammatory cytokine expression. Converts resolvins E1, D1 and D2 to their oxo products, which represents a mode of resolvin inactivation. Resolvin E1 plays important roles during the resolution phase of acute inflammation, while resolvins D1 and D2 have a unique role in obesity-induced adipose inflammation. This is 15-hydroxyprostaglandin dehydrogenase [NAD(+)] (Hpgd) from Rattus norvegicus (Rat).